The chain runs to 882 residues: Valine--tRNA ligase (882 aa).

Positions 50 to 60 (PNVTGKLHLGH) match the 'HIGH' region motif. Residues 526-530 (KMSKS) carry the 'KMSKS' region motif. Lys-529 is a binding site for ATP. Positions 810–881 (LEALIDLDLE…VLERIETLKE (72 aa)) form a coiled coil.

Belongs to the class-I aminoacyl-tRNA synthetase family. ValS type 1 subfamily. As to quaternary structure, monomer.

It localises to the cytoplasm. The catalysed reaction is tRNA(Val) + L-valine + ATP = L-valyl-tRNA(Val) + AMP + diphosphate. Its function is as follows. Catalyzes the attachment of valine to tRNA(Val). As ValRS can inadvertently accommodate and process structurally similar amino acids such as threonine, to avoid such errors, it has a 'posttransfer' editing activity that hydrolyzes mischarged Thr-tRNA(Val) in a tRNA-dependent manner. This is Valine--tRNA ligase from Listeria innocua serovar 6a (strain ATCC BAA-680 / CLIP 11262).